The following is a 945-amino-acid chain: LPS-assembly protein LptD (945 aa).

The first 33 residues, 1 to 33 (MALKSPAFRKKFPLLVTGSLLALQPLATSFVVA), serve as a signal peptide directing secretion. The tract at residues 56–98 (AQLPPRPVHDANSVSSSVATAADATGEEASGDKSKLVTEAKGR) is disordered. The span at 65–79 (DANSVSSSVATAADA) shows a compositional bias: low complexity. A compositionally biased stretch (basic and acidic residues) spans 85–98 (SGDKSKLVTEAKGR).

Belongs to the LptD family. As to quaternary structure, component of the lipopolysaccharide transport and assembly complex. Interacts with LptE and LptA.

Its subcellular location is the cell outer membrane. In terms of biological role, together with LptE, is involved in the assembly of lipopolysaccharide (LPS) at the surface of the outer membrane. The protein is LPS-assembly protein LptD of Pseudomonas fluorescens (strain ATCC BAA-477 / NRRL B-23932 / Pf-5).